The sequence spans 164 residues: Cytochrome c-type biogenesis protein CcmE (164 aa).

At 1–8 the chain is on the cytoplasmic side; that stretch reads MNPRRKKR. Residues 9–29 form a helical; Signal-anchor for type II membrane protein membrane-spanning segment; that stretch reads LTLAVALIGGVAAIASLLLYA. Residues 30-164 lie on the Periplasmic side of the membrane; it reads LNSNLNLFFT…EDQSKAGGYK (135 aa). Heme is bound by residues H131 and Y135. A disordered region spans residues 140–164; that stretch reads VAEAMGQSHEKLDYSEDQSKAGGYK. Positions 147–158 are enriched in basic and acidic residues; it reads SHEKLDYSEDQS.

Belongs to the CcmE/CycJ family.

The protein resides in the cell inner membrane. Functionally, heme chaperone required for the biogenesis of c-type cytochromes. Transiently binds heme delivered by CcmC and transfers the heme to apo-cytochromes in a process facilitated by CcmF and CcmH. The sequence is that of Cytochrome c-type biogenesis protein CcmE from Shewanella piezotolerans (strain WP3 / JCM 13877).